Consider the following 275-residue polypeptide: Formamidopyrimidine-DNA glycosylase (275 aa).

Catalysis depends on proline 2, which acts as the Schiff-base intermediate with DNA. Glutamate 3 functions as the Proton donor in the catalytic mechanism. The active-site Proton donor; for beta-elimination activity is lysine 59. DNA is bound by residues histidine 92, arginine 111, and lysine 155. Residues 240-274 form an FPG-type zinc finger; sequence YVYGQTGEPCRRCGHEIEKMKLGGRGTHYCPHCQQ. Catalysis depends on arginine 264, which acts as the Proton donor; for delta-elimination activity.

The protein belongs to the FPG family. In terms of assembly, monomer. Zn(2+) is required as a cofactor.

The enzyme catalyses Hydrolysis of DNA containing ring-opened 7-methylguanine residues, releasing 2,6-diamino-4-hydroxy-5-(N-methyl)formamidopyrimidine.. It catalyses the reaction 2'-deoxyribonucleotide-(2'-deoxyribose 5'-phosphate)-2'-deoxyribonucleotide-DNA = a 3'-end 2'-deoxyribonucleotide-(2,3-dehydro-2,3-deoxyribose 5'-phosphate)-DNA + a 5'-end 5'-phospho-2'-deoxyribonucleoside-DNA + H(+). Involved in base excision repair of DNA damaged by oxidation or by mutagenic agents. Acts as a DNA glycosylase that recognizes and removes damaged bases. Has a preference for oxidized purines, such as 7,8-dihydro-8-oxoguanine (8-oxoG). Has AP (apurinic/apyrimidinic) lyase activity and introduces nicks in the DNA strand. Cleaves the DNA backbone by beta-delta elimination to generate a single-strand break at the site of the removed base with both 3'- and 5'-phosphates. This is Formamidopyrimidine-DNA glycosylase from Exiguobacterium sp. (strain ATCC BAA-1283 / AT1b).